The following is a 407-amino-acid chain: Probable tRNA sulfurtransferase (407 aa).

Residues 61–165 form the THUMP domain; it reads NEITNRLSKI…LDAIYMYEEV (105 aa). ATP is bound by residues 183-184, 208-209, R265, G287, and Q296; these read ML and HF.

Belongs to the ThiI family.

It localises to the cytoplasm. It carries out the reaction [ThiI sulfur-carrier protein]-S-sulfanyl-L-cysteine + a uridine in tRNA + 2 reduced [2Fe-2S]-[ferredoxin] + ATP + H(+) = [ThiI sulfur-carrier protein]-L-cysteine + a 4-thiouridine in tRNA + 2 oxidized [2Fe-2S]-[ferredoxin] + AMP + diphosphate. The enzyme catalyses [ThiS sulfur-carrier protein]-C-terminal Gly-Gly-AMP + S-sulfanyl-L-cysteinyl-[cysteine desulfurase] + AH2 = [ThiS sulfur-carrier protein]-C-terminal-Gly-aminoethanethioate + L-cysteinyl-[cysteine desulfurase] + A + AMP + 2 H(+). Its pathway is cofactor biosynthesis; thiamine diphosphate biosynthesis. Its function is as follows. Catalyzes the ATP-dependent transfer of a sulfur to tRNA to produce 4-thiouridine in position 8 of tRNAs, which functions as a near-UV photosensor. Also catalyzes the transfer of sulfur to the sulfur carrier protein ThiS, forming ThiS-thiocarboxylate. This is a step in the synthesis of thiazole, in the thiamine biosynthesis pathway. The sulfur is donated as persulfide by IscS. This is Probable tRNA sulfurtransferase from Staphylococcus aureus (strain MRSA252).